A 320-amino-acid chain; its full sequence is Polyketide transferase FFUJ_12241 (320 aa).

The segment at 58-298 (RDITCLAWDP…ILKGKGHLDW (241 aa)) is abhydrolase domain.

The protein belongs to the polyketide transferase af380 family.

Its function is as follows. Polyketide transferase; part of the gene cluster that mediates the biosynthesis of fujikurins A-D, secondary metabolites playing a role during rice infection. The polyketide synthase PKS19 acts with the trans-enoyl reductase FFUJ_12240 and the polyketide transferase FFUJ_12241 to produce fujikurins, however, the biosynthesis pathway has not been identified yet. The polypeptide is Polyketide transferase FFUJ_12241 (Gibberella fujikuroi (strain CBS 195.34 / IMI 58289 / NRRL A-6831) (Bakanae and foot rot disease fungus)).